We begin with the raw amino-acid sequence, 347 residues long: NADH-ubiquinone oxidoreductase chain 2 (347 aa).

Helical transmembrane passes span 3–23, 26–46, 67–87, 96–116, 149–169, 178–198, 200–220, 239–259, 274–294, and 325–345; these read PLIF…TMIS, WLLI…IIMM, SMLL…WTIM, YMMT…FWVP, LNLN…GWGG, IMAY…MYNT, LMML…ALFI, ILTT…PLSG, NMLL…YFYM, and LSPT…MMLI.

The protein belongs to the complex I subunit 2 family. Core subunit of respiratory chain NADH dehydrogenase (Complex I) which is composed of 45 different subunits. Interacts with TMEM242.

It is found in the mitochondrion inner membrane. It catalyses the reaction a ubiquinone + NADH + 5 H(+)(in) = a ubiquinol + NAD(+) + 4 H(+)(out). In terms of biological role, core subunit of the mitochondrial membrane respiratory chain NADH dehydrogenase (Complex I) which catalyzes electron transfer from NADH through the respiratory chain, using ubiquinone as an electron acceptor. Essential for the catalytic activity and assembly of complex I. This is NADH-ubiquinone oxidoreductase chain 2 from Dasypus novemcinctus (Nine-banded armadillo).